A 96-amino-acid chain; its full sequence is Small ribosomal subunit protein bS6 (96 aa).

This sequence belongs to the bacterial ribosomal protein bS6 family.

Functionally, binds together with bS18 to 16S ribosomal RNA. The chain is Small ribosomal subunit protein bS6 from Streptococcus pneumoniae serotype 19F (strain G54).